The chain runs to 186 residues: Ribosome-recycling factor (186 aa).

This sequence belongs to the RRF family.

The protein localises to the cytoplasm. Functionally, responsible for the release of ribosomes from messenger RNA at the termination of protein biosynthesis. May increase the efficiency of translation by recycling ribosomes from one round of translation to another. This chain is Ribosome-recycling factor, found in Bordetella parapertussis (strain 12822 / ATCC BAA-587 / NCTC 13253).